We begin with the raw amino-acid sequence, 1268 residues long: uncharacterized protein (1268 aa).

Residues 191-206 show a composition bias toward low complexity; the sequence is KIVSVKPSKSSQQVDV. Disordered regions lie at residues 191 to 235 and 253 to 273; these read KIVS…SKKK and NCRSNPKTGNQGGNKGKSKGC. The segment covering 223 to 235 has biased composition (basic and acidic residues); that stretch reads RKPEKSSQDSKKK. The segment at 239-256 adopts a CCHC-type zinc-finger fold; that stretch reads PTCFYCNKKGHYATNCRS. The region spanning 465–644 is the Reverse transcriptase domain; that stretch reads EMGVIVPITY…KQVTFLGFVD (180 aa). One can recognise an Integrase catalytic domain in the interval 844-997; the sequence is VPEAPWKRIH…TPAECHFGRK (154 aa). A disordered region spans residues 1092-1268; sequence GDYSRSSVNP…RRERVRTTWR (177 aa). Polar residues-rich tracts occupy residues 1127 to 1143 and 1160 to 1169; these read VTSNGSSTDVNRGSRIT and GSCSPTNNDV. Residues 1208-1221 are compositionally biased toward low complexity; it reads PSTSTGTPRGSTST. The segment covering 1222–1249 has biased composition (polar residues); that stretch reads QLGQASTRNGSRYTASGRNPSCQGNRYS. Residues 1257 to 1268 show a composition bias toward basic and acidic residues; it reads TARRERVRTTWR.

This is an uncharacterized protein from Caenorhabditis elegans.